The following is a 145-amino-acid chain: D-aminoacyl-tRNA deacylase (145 aa).

The Gly-cisPro motif, important for rejection of L-amino acids signature appears at Gly137 to Pro138.

The protein belongs to the DTD family. In terms of assembly, homodimer.

It localises to the cytoplasm. The catalysed reaction is glycyl-tRNA(Ala) + H2O = tRNA(Ala) + glycine + H(+). The enzyme catalyses a D-aminoacyl-tRNA + H2O = a tRNA + a D-alpha-amino acid + H(+). In terms of biological role, an aminoacyl-tRNA editing enzyme that deacylates mischarged D-aminoacyl-tRNAs. Also deacylates mischarged glycyl-tRNA(Ala), protecting cells against glycine mischarging by AlaRS. Acts via tRNA-based rather than protein-based catalysis; rejects L-amino acids rather than detecting D-amino acids in the active site. By recycling D-aminoacyl-tRNA to D-amino acids and free tRNA molecules, this enzyme counteracts the toxicity associated with the formation of D-aminoacyl-tRNA entities in vivo and helps enforce protein L-homochirality. This Yersinia enterocolitica serotype O:8 / biotype 1B (strain NCTC 13174 / 8081) protein is D-aminoacyl-tRNA deacylase.